Reading from the N-terminus, the 1625-residue chain is Probable cation-transporting ATPase I (1625 aa).

8 helical membrane passes run 148-168 (VVSA…PNSA), 177-197 (LAIL…GATV), 358-378 (LIAA…AGAI), 637-657 (ASES…LLLV), 673-693 (WLNP…WSAA), 778-798 (ILAV…ALLV), 968-988 (LTSK…ALAL), and 997-1017 (AVAD…PLVA). Residue D1053 is the 4-aspartylphosphate intermediate of the active site. Residues D1340 and D1344 each contribute to the Mg(2+) site. The next 3 helical transmembrane spans lie at 1401 to 1421 (ILVG…AFGA), 1432 to 1452 (LLVN…TSQF), and 1547 to 1567 (VIAT…TPVI).

The protein belongs to the cation transport ATPase (P-type) (TC 3.A.3) family.

Its subcellular location is the cell membrane. The enzyme catalyses ATP + H2O = ADP + phosphate + H(+). In Mycobacterium tuberculosis (strain CDC 1551 / Oshkosh), this protein is Probable cation-transporting ATPase I (ctpI).